The sequence spans 721 residues: Leucine-rich repeat flightless-interacting protein 2 (721 aa).

A DVL3-binding region spans residues 1 to 370 (MGTPASGRKR…YMQGLKELKE (370 aa)). Serine 18 is subject to Phosphoserine. Residues 22–49 (EALSNIAREAEARLAAKRAARAEARDIR) adopt a coiled-coil conformation. Residues glycine 96, leucine 101, tyrosine 168, serine 173, serine 190, and serine 202 each carry the phosphoserine modification. 2 disordered regions span residues 232 to 262 (SARS…ESVV) and 295 to 338 (KSDK…IDPD). 2 stretches are compositionally biased toward polar residues: residues 237 to 251 (PGFT…VSSD) and 305 to 338 (TRPS…IDPD). Phosphoserine is present on residues serine 309, serine 312, serine 320, serine 324, and serine 328. Phosphothreonine is present on threonine 331. Phosphoserine occurs at positions 332 and 333. Coiled-coil stretches lie at residues 349-524 (DLKD…GEKH) and 566-714 (LDVR…KANR).

Belongs to the LRRFIP family. In terms of assembly, interacts (via N-terminus) with DVL3. Interacts with FLII. Weakly interacts with MYD88 in resting cells. Following LPS-stimulation, the interaction with MYD88 is rapidly enhanced; the complex gradually dissociates to basal levels after 6 hours of stimulation. Interaction with MYD88 is regulated by LPS-induced phosphorylation at Ser-202. In the presence of LPS, competes with FLII for MYD88-binding. Ser-190 and Ser-202 are phosphorylated in response to LPS stimulation. Ser-202 phosphorylation regulates the LPS-induced interaction with MYD88. Widely expressed, with highest levels in heart and skeletal muscle.

Its function is as follows. May function as activator of the canonical Wnt signaling pathway, in association with DVL3, upstream of CTNNB1/beta-catenin. Positively regulates Toll-like receptor (TLR) signaling in response to agonist probably by competing with the negative FLII regulator for MYD88-binding. This chain is Leucine-rich repeat flightless-interacting protein 2 (LRRFIP2), found in Homo sapiens (Human).